The primary structure comprises 299 residues: NAD kinase 1 (299 aa).

Aspartate 62 (proton acceptor) is an active-site residue. NAD(+) contacts are provided by residues 62 to 63 (DG), lysine 67, 143 to 144 (ND), lysine 173, and aspartate 175.

Belongs to the NAD kinase family. A divalent metal cation serves as cofactor.

It is found in the cytoplasm. It carries out the reaction NAD(+) + ATP = ADP + NADP(+) + H(+). Functionally, involved in the regulation of the intracellular balance of NAD and NADP, and is a key enzyme in the biosynthesis of NADP. Catalyzes specifically the phosphorylation on 2'-hydroxyl of the adenosine moiety of NAD to yield NADP. This chain is NAD kinase 1, found in Prochlorococcus marinus subsp. pastoris (strain CCMP1986 / NIES-2087 / MED4).